We begin with the raw amino-acid sequence, 664 residues long: Intraflagellar transport protein 70A (664 aa).

7 TPR repeats span residues 11-44 (DGEF…SPRS), 45-78 (RAGL…HPEL), 153-186 (LDGQ…SGYR), 188-220 (DLSY…GIRQ), 392-423 (LTKQ…EKYI), 424-456 (PVLM…CNDH), and 458-491 (VWKL…HYDN). The stretch at 507 to 534 (YIMTSQNEEAEELMRKIEKEEEQLSYDD) forms a coiled coil. A TPR 8 repeat occupies 543 to 576 (CIVNLVIGTLYCAKGNYDFGISRVIKSLEPYNKK).

This sequence belongs to the TTC30/dfy-1/fleer family.

The protein resides in the cell projection. It localises to the cilium. In terms of biological role, required for polyglutamylation of axonemal tubulin. Plays a role in anterograde intraflagellar transport (IFT), the process by which cilia precursors are transported from the base of the cilium to the site of their incorporation at the tip. This is Intraflagellar transport protein 70A (IFT70A) from Bos taurus (Bovine).